The chain runs to 486 residues: FAD-dependent oxidoreductase domain-containing protein 1 (486 aa).

Residues 62–82 (EHSDVVIVGGGVLGLSVAYWL) form a helical membrane-spanning segment.

Associates with components of the mitochondrial respiratory chain complex I. It depends on FAD as a cofactor.

The protein localises to the mitochondrion inner membrane. In terms of biological role, required for the assembly of the mitochondrial membrane respiratory chain NADH dehydrogenase (Complex I). Involved in mid-late stages of complex I assembly. The polypeptide is FAD-dependent oxidoreductase domain-containing protein 1 (Homo sapiens (Human)).